The primary structure comprises 651 residues: MLRGPAAVWAALGPLLWACGLALRGGMLYPRESPSRERKELNGLWSFRADFSENRRQGFEQQWYRTPLRESGPTLDMPVPSSFNDVGQDRQLRSFVGWVWYEREATLPQRWTQDLGTRVVLRIGSAHYYAIVWVNGVHVAEHEGGHLPFEADISKLVQSGPLASCRITIAINNTLTPHTLPPGTILYQTDTSKYPKGYFVQNINFDFFNYAGLHRPVLLYTTPTTYIDDITISTSVNQDTGLVDYQIFVEGGEHFQLEVRLLDEEGKVVAQGTGGRGQLQVPNAHLWWPYLMHEHPAYLYSLEVRLTAQTAAGSVSDFYTLPVGIRTVAVTEHQFLINGKPFYFHGVNKHEDADIRGKGFDWPLLVKDFNLLRWLGANAFRTSHYPYAEEVMQLCDRYGIVVIDESPGVGIVLVESYSNVSLQHHLEVMEELVRRDKNHPAVVMWSVANEPASFLKPAGYYFKTLIAHTKALDPSRPVTFVTNSNYEADLGAPYVDVICVNSYYSWYHDYGHMEVIQLQLATQFENWYRTYQKPIIQSEYGADTIAGFHQDPPLMFSEEYQKGLLEQYHLVLDQKRKEYVVGELIWNFADFMTNQSPQRVMGNKKGIFTRQRQPKGAAFLLRERYWKLANETRYPWSAVKSQCLENSPFTL.

A signal peptide spans 1 to 22 (MLRGPAAVWAALGPLLWACGLA). Asn172 and Asn419 each carry an N-linked (GlcNAc...) asparagine glycan. The active-site Proton donor is the Glu450. N-linked (GlcNAc...) asparagine glycosylation occurs at Asn630.

The protein belongs to the glycosyl hydrolase 2 family. As to quaternary structure, homotetramer.

It localises to the lysosome. It carries out the reaction a beta-D-glucuronoside + H2O = D-glucuronate + an alcohol. With respect to regulation, inhibited by L-aspartic acid. Plays an important role in the degradation of dermatan and keratan sulfates. The sequence is that of Beta-glucuronidase (GUSB) from Felis catus (Cat).